Here is a 116-residue protein sequence, read N- to C-terminus: Endocuticle structural glycoprotein ABD-4 (116 aa).

Glutamine 1 is subject to Pyrrolidone carboxylic acid. The 73-residue stretch at 20–92 (DGSYQWNYET…PQGAHFPTPP (73 aa)) folds into the Chitin-binding type R&amp;R domain. The disordered stretch occupies residues 78-97 (ENGFVPQGAHFPTPPPIPPA). Residue threonine 90 is glycosylated (O-linked (GalNAc) threonine; in ADB-4A, ABD-4B and ABD-4C). An O-linked (GalNAc) threonine; in ADB-4A and ABD-4B glycan is attached at threonine 107. Residue threonine 111 is glycosylated (O-linked (GalNAc) threonine; in ADB-4A). Position 116 is a proline amide (proline 116).

In terms of processing, 3 variants exists that arise from a sequential glycosylation with N-acetylgalactosamine at three (ABD-4A), two (ABD-4B) or one (ABD-4C) threonine residues.

Functionally, component of the soft endocuticle of migratory locust. This Locusta migratoria (Migratory locust) protein is Endocuticle structural glycoprotein ABD-4.